The sequence spans 96 residues: Co-chaperonin GroES (96 aa).

Belongs to the GroES chaperonin family. In terms of assembly, heptamer of 7 subunits arranged in a ring. Interacts with the chaperonin GroEL.

The protein resides in the cytoplasm. Together with the chaperonin GroEL, plays an essential role in assisting protein folding. The GroEL-GroES system forms a nano-cage that allows encapsulation of the non-native substrate proteins and provides a physical environment optimized to promote and accelerate protein folding. GroES binds to the apical surface of the GroEL ring, thereby capping the opening of the GroEL channel. In Aromatoleum aromaticum (strain DSM 19018 / LMG 30748 / EbN1) (Azoarcus sp. (strain EbN1)), this protein is Co-chaperonin GroES.